Consider the following 1138-residue polypeptide: Nonsense-mediated mRNA decay factor SMG7 (1138 aa).

Ser2 is subject to N-acetylserine. TPR repeat units lie at residues Gln152–Asn185 and Gln187–Phe219. Disordered stretches follow at residues Ala515–Arg612, Ser649–Ala745, Gln838–Pro871, Ser990–Glu1090, and Ser1106–His1138. Ser519 carries the phosphoserine modification. Residues Val525 to Asp537 are compositionally biased toward polar residues. The segment covering Glu548–Lys582 has biased composition (basic and acidic residues). Position 575 is a phosphothreonine (Thr575). Composition is skewed to polar residues over residues Pro584–Phe597 and Ser649–Arg673. Residues Pro674 to Ser721 are compositionally biased toward low complexity. Phosphoserine occurs at positions 732 and 848. A compositionally biased stretch (basic and acidic residues) spans Pro854–Lys868. Polar residues predominate over residues Ser990–Thr999. Residues Pro1000–Pro1026 show a composition bias toward low complexity. Over residues Asp1037–Lys1051 the composition is skewed to basic and acidic residues. Positions Ser1063–Trp1082 are enriched in polar residues. Over residues Gln1118–Gly1132 the composition is skewed to low complexity.

In terms of assembly, part of a complex that contains SMG5, SMG7, PPP2CA, a short isoform of UPF3A (isoform UPF3AS, but not isoform UPF3AL) and phosphorylated UPF1. Interacts with DHX34; the interaction is RNA-independent.

The protein localises to the cytoplasm. The protein resides in the nucleus. Plays a role in nonsense-mediated mRNA decay. Recruits UPF1 to cytoplasmic mRNA decay bodies. Together with SMG5 is thought to provide a link to the mRNA degradation machinery involving exonucleolytic pathways, and to serve as an adapter for UPF1 to protein phosphatase 2A (PP2A), thereby triggering UPF1 dephosphorylation. The polypeptide is Nonsense-mediated mRNA decay factor SMG7 (Mus musculus (Mouse)).